Here is a 296-residue protein sequence, read N- to C-terminus: tRNA dimethylallyltransferase (296 aa).

An ATP-binding site is contributed by 9 to 16 (GPTAVGKT). 11–16 (TAVGKT) contacts substrate. The interval 34–37 (DSRQ) is interaction with substrate tRNA.

This sequence belongs to the IPP transferase family. As to quaternary structure, monomer. The cofactor is Mg(2+).

The catalysed reaction is adenosine(37) in tRNA + dimethylallyl diphosphate = N(6)-dimethylallyladenosine(37) in tRNA + diphosphate. Its function is as follows. Catalyzes the transfer of a dimethylallyl group onto the adenine at position 37 in tRNAs that read codons beginning with uridine, leading to the formation of N6-(dimethylallyl)adenosine (i(6)A). In Chloroflexus aurantiacus (strain ATCC 29366 / DSM 635 / J-10-fl), this protein is tRNA dimethylallyltransferase.